Here is a 412-residue protein sequence, read N- to C-terminus: Delta-aminolevulinic acid dehydratase, chloroplastic (412 aa).

Residues 1 to 48 (MASSIPNAPSAFNSQSYVGLRAPLRTFNFSSPQAAKIPRSQRLFVVRA) constitute a chloroplast transit peptide. A disordered region spans residues 68 to 101 (VRPRPAAPVGTPVVPSLPLHRRPRRNRKSPALRS). Residues 86-97 (LHRRPRRNRKSP) show a composition bias toward basic residues. K280 functions as the Schiff-base intermediate with substrate in the catalytic mechanism. 5-aminolevulinate contacts are provided by R290 and K302. Mg(2+) is bound at residue E318. K333 serves as the catalytic Schiff-base intermediate with substrate. S359 and Y398 together coordinate 5-aminolevulinate.

This sequence belongs to the ALAD family. In terms of assembly, homooctamer. The cofactor is Mg(2+). As to expression, leaves and root nodules.

It localises to the plastid. It is found in the chloroplast. It catalyses the reaction 2 5-aminolevulinate = porphobilinogen + 2 H2O + H(+). It participates in porphyrin-containing compound metabolism; protoporphyrin-IX biosynthesis; coproporphyrinogen-III from 5-aminolevulinate: step 1/4. Is committed to plant tetrapyrrole synthesis. Its function is as follows. Catalyzes an early step in the biosynthesis of tetrapyrroles. Binds two molecules of 5-aminolevulinate per subunit, each at a distinct site, and catalyzes their condensation to form porphobilinogen. This chain is Delta-aminolevulinic acid dehydratase, chloroplastic (HEMB), found in Glycine max (Soybean).